Here is a 208-residue protein sequence, read N- to C-terminus: LexA repressor (208 aa).

The H-T-H motif DNA-binding region spans 28–48 (RAEIARELGFRSANAAEEHLK). Catalysis depends on for autocatalytic cleavage activity residues Ser-125 and Lys-162.

It belongs to the peptidase S24 family. As to quaternary structure, homodimer.

The catalysed reaction is Hydrolysis of Ala-|-Gly bond in repressor LexA.. Functionally, represses a number of genes involved in the response to DNA damage (SOS response), including recA and lexA. In the presence of single-stranded DNA, RecA interacts with LexA causing an autocatalytic cleavage which disrupts the DNA-binding part of LexA, leading to derepression of the SOS regulon and eventually DNA repair. The protein is LexA repressor of Aliivibrio fischeri (strain ATCC 700601 / ES114) (Vibrio fischeri).